Consider the following 104-residue polypeptide: N(4)-acetylcytidine amidohydrolase (104 aa).

Residues 6–102 (ITFYQRFEAD…SEFWVIEIRL (97 aa)) enclose the ASCH domain. The active-site Proton acceptor is the lysine 21. Threonine 24 (nucleophile) is an active-site residue. Glutamate 74 acts as the Proton donor in catalysis.

Belongs to the N(4)-acetylcytidine amidohydrolase family.

It carries out the reaction N(4)-acetylcytidine + H2O = cytidine + acetate + H(+). The catalysed reaction is N(4)-acetyl-2'-deoxycytidine + H2O = 2'-deoxycytidine + acetate + H(+). The enzyme catalyses N(4)-acetylcytosine + H2O = cytosine + acetate + H(+). In terms of biological role, catalyzes the hydrolysis of N(4)-acetylcytidine (ac4C). This chain is N(4)-acetylcytidine amidohydrolase, found in Haemophilus influenzae (strain PittEE).